Here is a 120-residue protein sequence, read N- to C-terminus: Large ribosomal subunit protein eL18 (120 aa).

Belongs to the eukaryotic ribosomal protein eL18 family. Part of the 50S ribosomal subunit.

The chain is Large ribosomal subunit protein eL18 from Pyrococcus furiosus (strain ATCC 43587 / DSM 3638 / JCM 8422 / Vc1).